Reading from the N-terminus, the 261-residue chain is Hemin import ATP-binding protein HmuV (261 aa).

Residues 7–243 (LRGQNLSLQF…EIIDAVYGYK (237 aa)) form the ABC transporter domain. Residue 39–46 (GPNGAGKS) participates in ATP binding.

Belongs to the ABC transporter superfamily. Heme (hemin) importer (TC 3.A.1.14.5) family. As to quaternary structure, the complex is composed of two ATP-binding proteins (HmuV), two transmembrane proteins (HmuU) and a solute-binding protein (HmuT).

The protein resides in the cell inner membrane. Functionally, part of the ABC transporter complex HmuTUV involved in hemin import. Responsible for energy coupling to the transport system. In Vibrio vulnificus (strain YJ016), this protein is Hemin import ATP-binding protein HmuV.